We begin with the raw amino-acid sequence, 190 residues long: Ohanin (190 aa).

Residues 1–20 (MLLFTLCFFADQENGGKALA) form the signal peptide. Residues 21-127 (SPPGNWQKAD…RIWQKGLWWL (107 aa)) enclose the B30.2/SPRY domain. A propeptide spanning residues 128 to 190 (RRLETDSDKL…IGARVSLANL (63 aa)) is cleaved from the precursor.

In terms of tissue distribution, expressed by the venom gland.

It is found in the secreted. Functionally, neurotoxin that produces dose-dependent hypolocomotion and hyperalgesia in mice. May directly act on the central nervous system, as it is 6500-fold more potent when administered intracerebroventricularly than intraperitoneal. This Ophiophagus hannah (King cobra) protein is Ohanin.